The sequence spans 238 residues: CD63 antigen (238 aa).

The Cytoplasmic portion of the chain corresponds to 2 to 11; that stretch reads AVEGGMKCVK. Residues 12–32 traverse the membrane as a helical segment; sequence FLLYVLLLAFCACAVGLIAVG. Residues 33-51 lie on the Extracellular side of the membrane; that stretch reads VGAQLVLSQTIIQGATPGS. A helical membrane pass occupies residues 52–72; it reads LLPVVIIAVGVFLFLVAFVGC. Topologically, residues 73–81 are cytoplasmic; sequence CGACKENYC. The chain crosses the membrane as a helical span at residues 82–102; it reads LMITFAIFLSLIMLVEVAAAI. The Extracellular segment spans residues 103–203; it reads AGYVFRDKVM…KIGGWLRKNV (101 aa). Residues asparagine 130, asparagine 150, and asparagine 172 are each glycosylated (N-linked (GlcNAc...) asparagine). A helical membrane pass occupies residues 204 to 224; sequence LVVAAAALGIAFVEVLGIVFA. Residues 225 to 238 lie on the Cytoplasmic side of the membrane; sequence CCLVKSIRSGYEVM. Residues 234–238 carry the Lysosomal targeting motif motif; that stretch reads GYEVM.

Belongs to the tetraspanin (TM4SF) family. Interacts with TIMP1 and ITGB1 and recruits TIMP1 to ITGB1. Interacts with CD9. Identified in a complex with CD9 and ITGB3. Interacts with PMEL. Interacts with KDR/VEGFR2; identified in a complex with ITGB1 and KDR/VEGFR2 and is required to recruit KDR to ITGB1 complexes. Interacts with SYT7. In terms of processing, palmitoylated at a low, basal level in unstimulated platelets. The level of palmitoylation increases when platelets are activated by thrombin (in vitro). As to expression, detected in platelets (at protein level). Dysplastic nevi, radial growth phase primary melanomas, hematopoietic cells, tissue macrophages.

Its subcellular location is the cell membrane. It is found in the lysosome membrane. The protein resides in the late endosome membrane. The protein localises to the endosome. It localises to the multivesicular body. Its subcellular location is the melanosome. It is found in the secreted. The protein resides in the extracellular exosome. The protein localises to the cell surface. In terms of biological role, functions as a cell surface receptor for TIMP1 and plays a role in the activation of cellular signaling cascades. Plays a role in the activation of ITGB1 and integrin signaling, leading to the activation of AKT, FAK/PTK2 and MAP kinases. Promotes cell survival, reorganization of the actin cytoskeleton, cell adhesion, spreading and migration, via its role in the activation of AKT and FAK/PTK2. Plays a role in VEGFA signaling via its role in regulating the internalization of KDR/VEGFR2. Plays a role in intracellular vesicular transport processes, and is required for normal trafficking of the PMEL luminal domain that is essential for the development and maturation of melanocytes. Plays a role in the adhesion of leukocytes onto endothelial cells via its role in the regulation of SELP trafficking. May play a role in mast cell degranulation in response to Ms4a2/FceRI stimulation, but not in mast cell degranulation in response to other stimuli. The polypeptide is CD63 antigen (CD63) (Homo sapiens (Human)).